Reading from the N-terminus, the 463-residue chain is UDP-N-acetylmuramoylalanine--D-glutamate ligase (463 aa).

Gly109 to Thr115 serves as a coordination point for ATP.

This sequence belongs to the MurCDEF family.

The protein localises to the cytoplasm. The catalysed reaction is UDP-N-acetyl-alpha-D-muramoyl-L-alanine + D-glutamate + ATP = UDP-N-acetyl-alpha-D-muramoyl-L-alanyl-D-glutamate + ADP + phosphate + H(+). The protein operates within cell wall biogenesis; peptidoglycan biosynthesis. Its function is as follows. Cell wall formation. Catalyzes the addition of glutamate to the nucleotide precursor UDP-N-acetylmuramoyl-L-alanine (UMA). This Leptospira interrogans serogroup Icterohaemorrhagiae serovar Lai (strain 56601) protein is UDP-N-acetylmuramoylalanine--D-glutamate ligase.